Consider the following 198-residue polypeptide: uncharacterized protein (198 aa).

It to A.aeolicus aq_1211 and aq_1583.

This is an uncharacterized protein from Aquifex aeolicus (strain VF5).